A 172-amino-acid polypeptide reads, in one-letter code: ATP synthase subunit b (172 aa).

Residues 27-47 form a helical membrane-spanning segment; that stretch reads LAIVIFGLYKFLPPFIGGILE.

The protein belongs to the ATPase B chain family. As to quaternary structure, F-type ATPases have 2 components, F(1) - the catalytic core - and F(0) - the membrane proton channel. F(1) has five subunits: alpha(3), beta(3), gamma(1), delta(1), epsilon(1). F(0) has four main subunits: a(1), b(1), b'(1) and c(10-14). The alpha and beta chains form an alternating ring which encloses part of the gamma chain. F(1) is attached to F(0) by a central stalk formed by the gamma and epsilon chains, while a peripheral stalk is formed by the delta, b and b' chains.

It is found in the cellular thylakoid membrane. Functionally, f(1)F(0) ATP synthase produces ATP from ADP in the presence of a proton or sodium gradient. F-type ATPases consist of two structural domains, F(1) containing the extramembraneous catalytic core and F(0) containing the membrane proton channel, linked together by a central stalk and a peripheral stalk. During catalysis, ATP synthesis in the catalytic domain of F(1) is coupled via a rotary mechanism of the central stalk subunits to proton translocation. In terms of biological role, component of the F(0) channel, it forms part of the peripheral stalk, linking F(1) to F(0). This Prochlorococcus marinus (strain MIT 9313) protein is ATP synthase subunit b.